A 40-amino-acid polypeptide reads, in one-letter code: Mastoparan-like peptide 12c (40 aa).

Positions 1–7 are cleaved as a signal peptide; the sequence is MSAEALA. Residues 1–22 form a disordered region; sequence MSAEALADPKADPLAGPNPDAD. AXPX repeat units follow at residues 7-10, 11-14, 15-18, and 19-22; these read ADPK, ADPL, AGPN, and PDAD. The propeptide occupies 8-25; sequence DPKADPLAGPNPDADPEA. Leucine 39 is modified (leucine amide).

The protein belongs to the MCD family. Mastoparan subfamily. As to expression, expressed by the venom gland.

It is found in the secreted. In terms of biological role, shows mast cell degranulation and antimicrobial activities against the Gram-negative bacteria E.coli ATCC 25922 (MIC=6.0 ug/ml), the Gram-positive bacteria S.aureus ATCC 2592 (MIC=3.0 ug/ml) and the fungus C.albicans ATCC 2002 (MIC=12 ug/ml). Exhibits little hemolytic activity against washed human erythrocytes. Its mast cell degranulation activity may be related to the activation of G-protein coupled receptors in mast cells as well as interaction with other proteins located in cell endosomal membranes in the mast cells. In Vespa magnifica (Hornet), this protein is Mastoparan-like peptide 12c.